Consider the following 387-residue polypeptide: Transmembrane protein 120 homolog (387 aa).

A coiled-coil region spans residues 1–39 (MNIDSLKNEWEELNKEFAELESCNRRYIELLEQLHSHQQ). Asparagine 111 is a glycosylation site (N-linked (GlcNAc...) asparagine). 6 helical membrane passes run 130-150 (FKLI…IFNY), 155-175 (LAFI…ESIL), 191-211 (FIST…HWQI), 216-238 (FMYF…KGLL), 264-284 (GLSF…YNAW), and 302-322 (VMSG…LWVV). Positions 346–387 (RKEMKNSASDLDLSSGSKLSPTATTTTSIATATQTPAEKKET) are disordered. A phosphoserine mark is found at serine 352, serine 354, and serine 365. The segment covering 352–381 (SASDLDLSSGSKLSPTATTTTSIATATQTP) has biased composition (low complexity).

It belongs to the TMEM120 family.

The protein localises to the membrane. In Drosophila melanogaster (Fruit fly), this protein is Transmembrane protein 120 homolog.